The following is a 389-amino-acid chain: Cytochrome oxidase assembly protein SHY1 (389 aa).

At 1 to 71 the chain is on the mitochondrial matrix side; it reads MSLLGARSTY…SRRERSFGKK (71 aa). A helical membrane pass occupies residues 72–92; the sequence is IVLGLMFAMPIISFYLGTWQV. Residues 93–341 lie on the Mitochondrial intermembrane side of the membrane; sequence RRLKWKTKLI…KPTIDLKNNH (249 aa). Residues 292–311 form a disordered region; the sequence is GTQAVDNNTSKPRSRQEMPT. Residues 342-362 form a helical membrane-spanning segment; it reads LQYLVTWYGLSFLSTIFLIVA. The Mitochondrial matrix portion of the chain corresponds to 363–389; sequence LRKAKRGGVVSQDQLMKEKLKHSRKYM.

The protein belongs to the SURF1 family. As to quaternary structure, interacts with COA1, COX14 and MSS51.

Its subcellular location is the mitochondrion inner membrane. Its function is as follows. Required for efficient assembly of cytochrome c oxidase in the mitochondrial inner membrane. Involved in a step that couples MSS51-COX14-dependent regulation of COX1 translation to early steps of cytochrome c oxidase assembly. The chain is Cytochrome oxidase assembly protein SHY1 (SHY1) from Saccharomyces cerevisiae (strain ATCC 204508 / S288c) (Baker's yeast).